A 216-amino-acid chain; its full sequence is MKIIEFRKKIPYLRYLEMQEKLRKFRKECILFLEHAPTITGGINYNPENLLVKPEFLESMGIQIHWTQRGGDFTAHEPGQLVLYSHVDLKKRNLSIRFYLENLLRSVIDSVRSTWDLQLISDSDSPGLYLESNPSQKICSIGVNFKSFFTSHGIAFNLSNDLKTFRCINPCGRNWTNMTSVKDLGLDFGLHKRDELISCLKKNLCSFLEPINVSSS.

The BPL/LPL catalytic domain maps to 24-212; it reads KFRKECILFL…NLCSFLEPIN (189 aa). Substrate-binding positions include 69–76, 140–142, and 153–155; these read RGGDFTAH, SIG, and GIA. C171 acts as the Acyl-thioester intermediate in catalysis.

This sequence belongs to the LipB family.

It localises to the cytoplasm. The enzyme catalyses octanoyl-[ACP] + L-lysyl-[protein] = N(6)-octanoyl-L-lysyl-[protein] + holo-[ACP] + H(+). It functions in the pathway protein modification; protein lipoylation via endogenous pathway; protein N(6)-(lipoyl)lysine from octanoyl-[acyl-carrier-protein]: step 1/2. Its function is as follows. Catalyzes the transfer of endogenously produced octanoic acid from octanoyl-acyl-carrier-protein onto the lipoyl domains of lipoate-dependent enzymes. Lipoyl-ACP can also act as a substrate although octanoyl-ACP is likely to be the physiological substrate. The polypeptide is Octanoyltransferase (Leptospira interrogans serogroup Icterohaemorrhagiae serovar copenhageni (strain Fiocruz L1-130)).